The following is a 160-amino-acid chain: Putative antiporter subunit mnhE2 (160 aa).

Helical transmembrane passes span 22–42 (HFKF…IYIL), 55–75 (IWVA…SSIS), and 100–120 (SDWA…STVI).

Belongs to the CPA3 antiporters (TC 2.A.63) subunit E family. As to quaternary structure, may form a heterooligomeric complex that consists of seven subunits: mnhA2, mnhB2, mnhC2, mnhD2, mnhE2, mnhF2 and mnhG2.

The protein localises to the cell membrane. This Staphylococcus aureus (strain Mu3 / ATCC 700698) protein is Putative antiporter subunit mnhE2 (mnhE2).